We begin with the raw amino-acid sequence, 295 residues long: tRNA-cytidine(32) 2-sulfurtransferase (295 aa).

A PP-loop motif motif is present at residues 63 to 68 (SGGKDS). Positions 138, 141, and 229 each coordinate [4Fe-4S] cluster.

This sequence belongs to the TtcA family. Homodimer. Requires Mg(2+) as cofactor. [4Fe-4S] cluster serves as cofactor.

It is found in the cytoplasm. It catalyses the reaction cytidine(32) in tRNA + S-sulfanyl-L-cysteinyl-[cysteine desulfurase] + AH2 + ATP = 2-thiocytidine(32) in tRNA + L-cysteinyl-[cysteine desulfurase] + A + AMP + diphosphate + H(+). Its pathway is tRNA modification. Its function is as follows. Catalyzes the ATP-dependent 2-thiolation of cytidine in position 32 of tRNA, to form 2-thiocytidine (s(2)C32). The sulfur atoms are provided by the cysteine/cysteine desulfurase (IscS) system. The sequence is that of tRNA-cytidine(32) 2-sulfurtransferase from Hyphomonas neptunium (strain ATCC 15444).